The primary structure comprises 20 residues: PEDPQRRYQEXQREXRXQQE.

The segment at 1–20 (PEDPQRRYQEXQREXRXQQE) is disordered.

In terms of assembly, heterodimer of a large and a small subunit.

Its function is as follows. Possesses antifungal activity against P.infestans but not F.graminearum. The polypeptide is Antifungal protein 2 large subunit (Malva parviflora (Little mallow)).